The chain runs to 423 residues: MLWRNEITEFMDQLSKYSQEILKTFKQLRPSEYKQYNEFLTQVTPLLQKTSEKIPELVDHIFNYLDNVEKICELLVNASSIIISSKIREQVKHGMSFSYKADLDSLADILSQKQYVLMHLSKNIAAEYFNTCLNQGKSKLDLKAASVFYSSRPRTASSAELYRKMLYAYGSPQEINYYTEKARNKTLDVEESDSMAIIERTARHNLSLMHPLEAMGLTFGATNTDADPEDLKDKTVINLTLPQATESITYHLKSLMQLKKVSTASGLNTNILKAFDNIISTPVKKNKMASKLAPGMDVVFTSDNGKTFFTKNILSKNMLAGPKERVFAYNNLISNLNNSCFIQNHNDFLRQQDSWPFYDAHNFTNKFLMQPIFSGQTRPRLQGAMEAAHVETHLTAFLQSIQPSRPQDPSVLASPKLSALILN.

This sequence belongs to the asfivirus E423R family.

It localises to the virion. This is an uncharacterized protein from Ornithodoros (relapsing fever ticks).